Consider the following 886-residue polypeptide: CRM-domain containing factor CFM3, chloroplastic/mitochondrial (886 aa).

A chloroplast and mitochondrion-targeting transit peptide spans 1–70 (MAAAAMAISP…LDLRPEPSPS (70 aa)). Disordered stretches follow at residues 56–84 (RPAS…TSRS) and 269–291 (TKGT…PPGH). 3 consecutive CRM domains span residues 174-270 (LTLP…EPTK), 378-475 (PSLS…ELAE), and 590-690 (ETIT…SKLR). Residues 270–281 (KGTSKNTQTLGM) are compositionally biased toward polar residues. The interval 771-886 (SFDNSVAVQN…QSTELTNTCS (116 aa)) is disordered. The span at 793–827 (NSDDEGDYSDEDDDEDDDNDEEDGFDYENDDEDDV) shows a compositional bias: acidic residues. Composition is skewed to polar residues over residues 841–852 (DFGSSDSENYVS) and 869–886 (DSRN…NTCS).

Interacts with RNA. Part of large ribonucleo-protein particles that contain CAF1 and/or CAF2, and RNC1.

It localises to the plastid. It is found in the chloroplast. Its subcellular location is the mitochondrion. Binds specific group II introns in chloroplasts and facilitates their splicing. Acts on subgroup IIB introns. The substrates of the subgroup IIB also require the CRM domain proteins CAF1 or CAF2, with a simultaneous binding of CFM3 and CAF1 or CAF2. May influence the biogenesis of the mitochondrial small ribosomal subunit. The polypeptide is CRM-domain containing factor CFM3, chloroplastic/mitochondrial (Oryza sativa subsp. japonica (Rice)).